Consider the following 323-residue polypeptide: Putative CDC123-like protein L884 (323 aa).

It belongs to the CDC123 family.

The polypeptide is Putative CDC123-like protein L884 (Acanthamoeba polyphaga mimivirus (APMV)).